Here is a 331-residue protein sequence, read N- to C-terminus: Phenylalanine--tRNA ligase alpha subunit (331 aa).

Glu-254 serves as a coordination point for Mg(2+).

Belongs to the class-II aminoacyl-tRNA synthetase family. Phe-tRNA synthetase alpha subunit type 1 subfamily. Tetramer of two alpha and two beta subunits. Requires Mg(2+) as cofactor.

It is found in the cytoplasm. It catalyses the reaction tRNA(Phe) + L-phenylalanine + ATP = L-phenylalanyl-tRNA(Phe) + AMP + diphosphate + H(+). The chain is Phenylalanine--tRNA ligase alpha subunit from Blochmanniella pennsylvanica (strain BPEN).